The sequence spans 72 residues: Hypertrehalosaemic prohormone (72 aa).

Residues M1 to A21 form the signal peptide. A Pyrrolidone carboxylic acid modification is found at Q22. T31 bears the Threonine amide mark.

This sequence belongs to the AKH/HRTH/RPCH family. Expressed in corpora cardiaca.

Its subcellular location is the secreted. Hypertrehalosaemic factors are neuropeptides that elevate the level of trehalose in the hemolymph (trehalose is the major carbohydrate in the hemolymph of insects). In Blaberus discoidalis (Tropical cockroach), this protein is Hypertrehalosaemic prohormone.